Here is a 293-residue protein sequence, read N- to C-terminus: Formamidopyrimidine-DNA glycosylase (293 aa).

P2 acts as the Schiff-base intermediate with DNA in catalysis. The active-site Proton donor is the E3. K58 functions as the Proton donor; for beta-elimination activity in the catalytic mechanism. DNA is bound by residues H104, R127, and R170. The segment at 257–293 (SVYGREGKPCRNPACGGTVERVVQSGRSTFFCASCQT) adopts an FPG-type zinc-finger fold. R283 functions as the Proton donor; for delta-elimination activity in the catalytic mechanism.

It belongs to the FPG family. Monomer. Requires Zn(2+) as cofactor.

The enzyme catalyses Hydrolysis of DNA containing ring-opened 7-methylguanine residues, releasing 2,6-diamino-4-hydroxy-5-(N-methyl)formamidopyrimidine.. The catalysed reaction is 2'-deoxyribonucleotide-(2'-deoxyribose 5'-phosphate)-2'-deoxyribonucleotide-DNA = a 3'-end 2'-deoxyribonucleotide-(2,3-dehydro-2,3-deoxyribose 5'-phosphate)-DNA + a 5'-end 5'-phospho-2'-deoxyribonucleoside-DNA + H(+). Involved in base excision repair of DNA damaged by oxidation or by mutagenic agents. Acts as a DNA glycosylase that recognizes and removes damaged bases. Has a preference for oxidized purines, such as 7,8-dihydro-8-oxoguanine (8-oxoG). Has AP (apurinic/apyrimidinic) lyase activity and introduces nicks in the DNA strand. Cleaves the DNA backbone by beta-delta elimination to generate a single-strand break at the site of the removed base with both 3'- and 5'-phosphates. This chain is Formamidopyrimidine-DNA glycosylase, found in Brucella ovis (strain ATCC 25840 / 63/290 / NCTC 10512).